Here is a 205-residue protein sequence, read N- to C-terminus: Cytochrome c biogenesis ATP-binding export protein CcmA (205 aa).

Residues 2–204 (LEVSNLTAIR…SPKLRKIKLG (203 aa)) enclose the ABC transporter domain. An ATP-binding site is contributed by 34 to 41 (GRNGTGKT).

The protein belongs to the ABC transporter superfamily. CcmA exporter (TC 3.A.1.107) family. As to quaternary structure, the complex is composed of two ATP-binding proteins (CcmA) and two transmembrane proteins (CcmB).

The protein localises to the cell inner membrane. The catalysed reaction is heme b(in) + ATP + H2O = heme b(out) + ADP + phosphate + H(+). Part of the ABC transporter complex CcmAB involved in the biogenesis of c-type cytochromes; once thought to export heme, this seems not to be the case, but its exact role is uncertain. Responsible for energy coupling to the transport system. This chain is Cytochrome c biogenesis ATP-binding export protein CcmA, found in Vibrio parahaemolyticus serotype O3:K6 (strain RIMD 2210633).